The following is a 327-amino-acid chain: Serum response factor homolog (327 aa).

Positions 12–43 (QKLQNASPALPEGTSSTPTPSSSTGLLPNGKK) are disordered. Residues 25–35 (TSSTPTPSSST) show a composition bias toward low complexity. In terms of domain architecture, MADS-box spans 45–105 (KGRVKIKMEY…GHVYTYATPK (61 aa)). Residues 189-225 (TFGEDDYNNDESGDDSDSEEASSDIKEEYQGSPTMVK) form a disordered region. Residues 191–210 (GEDDYNNDESGDDSDSEEAS) are compositionally biased toward acidic residues.

In terms of tissue distribution, expressed in muscle, varying with age, decreasing twofold during the first week of adulthood.

The protein localises to the nucleus. Its function is as follows. Transcription factor. Regulates myogenesis, in cooperation with transcription factors hlh-1 and hnd-1. Required for maintenance of muscle in adulthood. The chain is Serum response factor homolog from Caenorhabditis elegans.